Reading from the N-terminus, the 705-residue chain is Effector protein hopD1 (705 aa).

Composition is skewed to polar residues over residues 1–11 and 28–41; these read MNPLRSIQHNI and QAQQ…SPSQ. Disordered stretches follow at residues 1–41 and 173–207; these read MNPL…SPSQ and SSSL…DSGS. A compositionally biased stretch (low complexity) spans 173–184; it reads SSSLETPLLSSP.

The protein resides in the secreted. Functionally, effector protein involved in non-host recognition. The protein is Effector protein hopD1 (hopD1) of Pseudomonas syringae pv. tomato (strain ATCC BAA-871 / DC3000).